Consider the following 616-residue polypeptide: MALLQISEPGLSAAPHQRRLAVGIDLGTTHSLVATVRSGEAQTLVDSDGRDLLPSVVHYRRDGHSVGWQARDNAARDPENTVSSVKRLMGRSLDDIQQRYPHLPYRFHASDNGLPLIQTPAGNLNPIQVSADILSALAARAEAALGGVPDGVVITVPAYFDDAQRQGTKDAARLAGLHVLRLLNEPTAAAIAYGLDSGKEGVIAIYDLGGGTFDISILRLSRGVFEVLATGGDSALGGDDFDHLLAEWLREQAGIHDRDDRQLDHALRAAAVKAKIALSSAESASVSIAGWQGDITREQFDSLIAPLVKRTLLSCRRTLKDAGLTPEEVLEVVMVGGSTRVPLVREQVGTFFGRTPLTSIDPDKVVAMGAAIQADILVGNKPDSDMLLLDVIPLSLGLETMGGLVEKIIPRNTTIPVARAQEFTTFKDGQSGMMIHVLQGEREMVADCRSLARFSLRGLPPLPAGGAHIRVTFQVDADGLLSVTAMEKSTGVEASIQVKPSYGLSDTEIATMITDSMLNAKEDVGARRLAEQKVEAARVLESLQSALVADAELLSNDEKGVIVAASEHLHTMMQGSDPVAIEAAIKTVDQQTQEFAARRMDASIRRALAGHSVDEV.

Belongs to the heat shock protein 70 family.

Functionally, chaperone involved in the maturation of iron-sulfur cluster-containing proteins. Has a low intrinsic ATPase activity which is markedly stimulated by HscB. Involved in the maturation of IscU. This is Chaperone protein HscA from Pectobacterium carotovorum subsp. carotovorum (strain PC1).